A 520-amino-acid chain; its full sequence is Probable methylmalonate-semialdehyde/malonate-semialdehyde dehydrogenase [acylating], mitochondrial (520 aa).

Alanine 169, phenylalanine 171, lysine 195, glutamate 198, arginine 199, and serine 248 together coordinate NAD(+). The Nucleophile role is filled by cysteine 303. An NAD(+)-binding site is contributed by glutamate 403.

The protein belongs to the aldehyde dehydrogenase family. Homotetramer.

It is found in the mitochondrion. The enzyme catalyses 2-methyl-3-oxopropanoate + NAD(+) + CoA + H2O = propanoyl-CoA + hydrogencarbonate + NADH + H(+). It carries out the reaction 3-oxopropanoate + NAD(+) + CoA + H2O = hydrogencarbonate + acetyl-CoA + NADH + H(+). In terms of biological role, probable malonate and methylmalonate semialdehyde dehydrogenase involved in the catabolism of valine, thymine, and compounds catabolized by way of beta-alanine, including uracil and cytidine. The protein is Probable methylmalonate-semialdehyde/malonate-semialdehyde dehydrogenase [acylating], mitochondrial of Drosophila melanogaster (Fruit fly).